The primary structure comprises 1203 residues: DNA-directed RNA polymerase subunit beta (1203 aa).

Basic and acidic residues predominate over residues 1174-1195 (AAQEAKAAFEAEEAEKATKAEA). The segment at 1174 to 1203 (AAQEAKAAFEAEEAEKATKAEATEEAAEQE) is disordered.

It belongs to the RNA polymerase beta chain family. As to quaternary structure, the RNAP catalytic core consists of 2 alpha, 1 beta, 1 beta' and 1 omega subunit. When a sigma factor is associated with the core the holoenzyme is formed, which can initiate transcription.

It catalyses the reaction RNA(n) + a ribonucleoside 5'-triphosphate = RNA(n+1) + diphosphate. DNA-dependent RNA polymerase catalyzes the transcription of DNA into RNA using the four ribonucleoside triphosphates as substrates. The sequence is that of DNA-directed RNA polymerase subunit beta from Streptococcus pneumoniae serotype 19F (strain G54).